The chain runs to 260 residues: Factor V activator RVV-V gamma (260 aa).

An N-terminal signal peptide occupies residues 1–18 (MVLIKVLANLLVLQLSYA). Residues 19–24 (QKSSEL) constitute a propeptide that is removed on maturation. A Peptidase S1 domain is found at 25 to 251 (VVGGDECNIN…YNNWIQSIIA (227 aa)). 6 disulfide bridges follow: cysteine 31–cysteine 165, cysteine 52–cysteine 68, cysteine 100–cysteine 258, cysteine 144–cysteine 212, cysteine 176–cysteine 191, and cysteine 202–cysteine 227. Residues histidine 67 and aspartate 112 each act as charge relay system in the active site. Serine 206 (charge relay system) is an active-site residue. A glycan (N-linked (GlcNAc...) asparagine) is linked at asparagine 253.

Belongs to the peptidase S1 family. Snake venom subfamily. As to quaternary structure, monomer. As to expression, expressed by the venom gland.

Its subcellular location is the secreted. It carries out the reaction Fully activates human clotting factor V by a single cleavage at the 1545-Trp-Tyr-Leu-Arg-|-Ser-Asn-Asn-Gly-1552 bond. Cattle, but not rabbit, factor V is cleaved, and no other proteins of the clotting system are attacked. Esterase activity is observed on Bz-Arg-OEt and Tos-Arg-OMe, and amidase activity on Phe-pipecolyl-Arg-NHPhNO2.. Its function is as follows. Venom serine protease that selectively activates factor V (F5) in a calcium-independent manner. It cleaves the Arg(1545)-Ser(1546) linkage in the human factor V molecule. Induces the coagulation of mammalian plasma. The protein is Factor V activator RVV-V gamma of Daboia siamensis (Eastern Russel's viper).